The chain runs to 80 residues: MLIAWPDRVHCCEIMLQEGARVVDAVEMAALNGIEQAVGYAVFGVLVTSDHVLNDGDRVELLRPLLIDPKEARRRRAVSA.

Belongs to the UPF0125 (RnfH) family.

This chain is UPF0125 protein PD_1376, found in Xylella fastidiosa (strain Temecula1 / ATCC 700964).